The following is a 450-amino-acid chain: Alpha-2B adrenergic receptor (450 aa).

Topologically, residues 1–12 are extracellular; the sequence is MDHQDPYSVQAT. The helical transmembrane segment at 13-38 threads the bilayer; that stretch reads AAIAAAITFLILFTIFGNALVILAVL. Over 39–48 the chain is Cytoplasmic; it reads TSRSLRAPQN. A helical transmembrane segment spans residues 49–69; it reads LFLVSLAAADILVATLIIPFS. The Extracellular portion of the chain corresponds to 70–86; it reads LANELLGYWYFRRTWCE. A disulfide bridge links C85 with C164. The helical transmembrane segment at 87-107 threads the bilayer; sequence VYLALDVLFCTSSIVHLCAIS. Topologically, residues 108–128 are cytoplasmic; that stretch reads LDRYWAVSRALEYNSKRTPRR. Residues 129 to 149 traverse the membrane as a helical segment; that stretch reads IKCIILTVWLIAAVISLPPLI. Residues 150–172 are Extracellular-facing; it reads YKGDQGPQPRGRPQCKLNQEAWY. A helical transmembrane segment spans residues 173–193; that stretch reads ILASSIGSFFAPCLIMILVYL. Topologically, residues 194 to 368 are cytoplasmic; it reads RIYLIAKRSN…RRAQLTREKR (175 aa). Disordered regions lie at residues 204–229 and 241–329; these read RRGPRAKGGPGQGESKQPRPDHGGAL and ASAR…PLQQ. The segment covering 246 to 256 has biased composition (basic and acidic residues); that stretch reads VNGHSKSTGEK. Over residues 293-311 the composition is skewed to acidic residues; the sequence is PEDEAEEEEEEEEEEEECE. Residues 312 to 326 show a composition bias toward low complexity; the sequence is PQAVPVSPASACSPP. Residues 369 to 389 form a helical membrane-spanning segment; that stretch reads FTFVLAVVIGVFVLCWFPFFF. Residues 390–405 lie on the Extracellular side of the membrane; the sequence is SYSLGAICPKHCKVPH. Residues 406 to 426 traverse the membrane as a helical segment; that stretch reads GLFQFFFWIGYCNSSLNPVIY. Residues 427-450 lie on the Cytoplasmic side of the membrane; the sequence is TIFNQDFRRAFRRILCRPWTQTAW. A lipid anchor (S-palmitoyl cysteine) is attached at C442.

Belongs to the G-protein coupled receptor 1 family. Adrenergic receptor subfamily. ADRA2B sub-subfamily. In terms of assembly, interacts with RAB26. Interacts with PPP1R9B. Interacts with GGA1, GGA2 and GGA3.

Its subcellular location is the cell membrane. Functionally, alpha-2 adrenergic receptors mediate the catecholamine-induced inhibition of adenylate cyclase through the action of G proteins. The rank order of potency for agonists of this receptor is clonidine &gt; norepinephrine &gt; epinephrine = oxymetazoline &gt; dopamine &gt; p-tyramine = phenylephrine &gt; serotonin &gt; p-synephrine / p-octopamine. For antagonists, the rank order is yohimbine &gt; chlorpromazine &gt; phentolamine &gt; mianserine &gt; spiperone &gt; prazosin &gt; alprenolol &gt; propanolol &gt; pindolol. The sequence is that of Alpha-2B adrenergic receptor (ADRA2B) from Homo sapiens (Human).